The chain runs to 562 residues: uncharacterized protein (562 aa).

The next 5 helical transmembrane spans lie at 10 to 27 (IYPEIAVFLSLAIGYWVG), 34 to 53 (FSLGAVTATLLAAVVIGQFD), 63 to 85 (IFFLMFLFAVGYGIGPQFVQGIA), 92 to 114 (ALFAVVACLFSLLFPILCAKIAG), and 155 to 177 (FSVIPVAYAVTYIFGTVGSAIVL). RCK C-terminal domains lie at 204 to 288 (TENA…HPDS) and 290 to 377 (DETQ…QLGV). Helical transmembrane passes span 387–404 (VAFWAFAIVIGALLGSLV), 408–430 (GNLPLTLSTAGGVLIAGLIFSWV), 443–465 (PTVWFMNSVGLNVFIAAIGISAG), 475–497 (LGFSLFLWGVVATTLPLFFAALV), 504–526 (FHPAILLGCCAGARTTTASLGMI), and 539–561 (YTITYAVGNTLLTMWGLVLILIL).

The protein belongs to the AAE transporter (TC 2.A.81) family.

It is found in the cell membrane. This is an uncharacterized protein from Shewanella oneidensis (strain ATCC 700550 / JCM 31522 / CIP 106686 / LMG 19005 / NCIMB 14063 / MR-1).